Consider the following 527-residue polypeptide: GMP synthase [glutamine-hydrolyzing] (527 aa).

Positions 19–212 (KIIVLDYGSQ…AFSICGAKGD (194 aa)) constitute a Glutamine amidotransferase type-1 domain. Residue Cys-96 is the Nucleophile of the active site. Residues His-186 and Glu-188 contribute to the active site. Residues 213–402 (WSMANFVDMQ…LGMPDEVVWR (190 aa)) form the GMPS ATP-PPase domain. 240 to 246 (SGGVDSS) provides a ligand contact to ATP.

In terms of assembly, homodimer.

It catalyses the reaction XMP + L-glutamine + ATP + H2O = GMP + L-glutamate + AMP + diphosphate + 2 H(+). Its pathway is purine metabolism; GMP biosynthesis; GMP from XMP (L-Gln route): step 1/1. In terms of biological role, catalyzes the synthesis of GMP from XMP. This Streptococcus thermophilus (strain ATCC BAA-250 / LMG 18311) protein is GMP synthase [glutamine-hydrolyzing].